The primary structure comprises 102 residues: DET1- and DDB1-associated protein 1 (102 aa).

Alanine 2 is subject to N-acetylalanine. Residues serine 33 and serine 95 each carry the phosphoserine modification. A disordered region spans residues 67–102 (NAAKKRDQEQVEAEGESSAPPRKVARTDSPDMPEDT).

The protein belongs to the DDA1 family. In terms of assembly, component of numerous DCX (DDB1-CUL4-X-box) E3 ubiquitin-protein ligase complexes which consist of a core of DDB1, cullin-4 (CUL4A or CUL4B), DDA1 and RBX1. Component of the DCX(DCAF15) complex, also named CLR4(DCAF15) complex, composed of DCAF15, DDB1, cullin-4 (CUL4A or CUL4B), DDA1 and RBX1. Part of the DDD core complex containing DET1, DDA1 and DDB1; the DDD core complex recruits a specific UBE2E enzyme, such as UBE2E1, UBE2E2 UBE2E3, to form specific DDD-E2 complexes.

The protein operates within protein modification; protein ubiquitination. In terms of biological role, functions as a component of numerous distinct DCX (DDB1-CUL4-X-box) E3 ubiquitin-protein ligase complexes which mediate the ubiquitination and subsequent proteasomal degradation of target proteins. In the DCX complexes, acts as a scaffolding subunit required to stabilize the complex. This is DET1- and DDB1-associated protein 1 from Mus musculus (Mouse).